The following is a 304-amino-acid chain: uncharacterized protein (304 aa).

Residues 1 to 25 (MVKTAMLGAVALVIALGGTCGVADA) form the signal peptide. The 270-residue stretch at 34–303 (PMIVAHRAGT…DSPLAAQQWR (270 aa)) folds into the GP-PDE domain.

This is an uncharacterized protein from Mycobacterium tuberculosis (strain CDC 1551 / Oshkosh).